The chain runs to 353 residues: MSTSRNVPNKKNNTKQQKYQQQSQKQFKTVRATGNGEKEPFSLAMSYGHIPVVTASVHLLSSFLLRHLSFISSKEEKVFGSLTVFAAEAADKVSEHRQCLQRLINETMDSNMTSYSADVFNIQENQVKRDNGPTHYSVWYRSGNFAPNSILESNPVTLVDADAFDLIKQLTYRLGKAIFRLHNNGNSSFDIYVKDNLSNFKIYLNNLADHLEKDDIYDNFLDMVESQAKIKKDYYLNNRNLLVDNKSSNRTHHKSGDKSTVKSTDKQVEKKVEESSEKVPEVPKKIVIPKSACKPVVGGVSFAQAAGKSQTANSDTKEDQVTTSTSESTVEVKSLEVKETKEPDEEVFEDLNN.

Disordered stretches follow at residues 1-24 (MSTSRNVPNKKNNTKQQKYQQQSQ), 245-280 (NKSSNRTHHKSGDKSTVKSTDKQVEKKVEESSEKVP), and 305-353 (AAGK…DLNN). A compositionally biased stretch (low complexity) spans 9 to 24 (NKKNNTKQQKYQQQSQ). Over residues 254 to 280 (KSGDKSTVKSTDKQVEKKVEESSEKVP) the composition is skewed to basic and acidic residues. Positions 321-332 (VTTSTSESTVEV) are enriched in low complexity. Positions 342–353 (EPDEEVFEDLNN) are enriched in acidic residues.

This is an uncharacterized protein from Acanthamoeba polyphaga mimivirus (APMV).